The sequence spans 128 residues: Small ribosomal subunit protein uS12 (128 aa).

The tract at residues 1 to 24 is disordered; sequence MPTFNQLVKYGREKRKKKSKAPAL. Asp89 carries the post-translational modification 3-methylthioaspartic acid. The interval 105 to 128 is disordered; it reads AGVEGRRQSRSKYGTKRPKEEKGG.

It belongs to the universal ribosomal protein uS12 family. As to quaternary structure, part of the 30S ribosomal subunit. Contacts proteins S8 and S17. May interact with IF1 in the 30S initiation complex.

Its function is as follows. With S4 and S5 plays an important role in translational accuracy. Functionally, interacts with and stabilizes bases of the 16S rRNA that are involved in tRNA selection in the A site and with the mRNA backbone. Located at the interface of the 30S and 50S subunits, it traverses the body of the 30S subunit contacting proteins on the other side and probably holding the rRNA structure together. The combined cluster of proteins S8, S12 and S17 appears to hold together the shoulder and platform of the 30S subunit. The chain is Small ribosomal subunit protein uS12 from Aquifex aeolicus (strain VF5).